Consider the following 549-residue polypeptide: MLNQKLNPTPSEDLTIDVDLLYETDPCELKLDEMIEAEPEPEMIEGLPASDALTPADRYLELFEHVQSTKLFPDSKTFPDCAPKMDPLDILIRYRKVRRHRDFDLRRFVENHFWLPETLSSEYVSNPENSLKEHIDQLWPILTREPQDHIPWSSLLALPQSYIVPGGRFSETYYWDSYFTMLGLAESGREDLLKCMADNFAWMIENYGHIPNGNRTYYLSRSQPPVFALMVELFEEDGVRGARRYLDHLKMEYAFWMDGAESLALNQAYRHVVRMPDGSLLNRYWDDRDTPRDESWLEDVETAKHSGRPPNEVYRDLRAGAASGWDYSSRWLRDAGRLASIRTTQFIPIDLNAFLYKLESAIANISALKGERDTEALFRQKASDRRAAVNHYLWDDENGCYRDYDWRREEMALFSAASIVPLYVGMANHEQADRLANVVRSRLLTPGGIMATEYETGEQWDKPNGWAPLQWMAIQGFKRYGDDMLGDEIAHNWLKTVNHFYQEHHKLIEKYHISGGTPREGGGGEYPLQDGFGWTNGVVRRLIGLYGEP.

Residues R168, 175-176 (WD), N212, 221-223 (RSQ), 292-294 (RDE), and G324 each bind substrate. Active-site proton donor/acceptor residues include D326 and E509. E525 contributes to the substrate binding site.

It belongs to the glycosyl hydrolase 37 family. Monomer.

It is found in the cytoplasm. It carries out the reaction alpha,alpha-trehalose + H2O = alpha-D-glucose + beta-D-glucose. It participates in glycan degradation; trehalose degradation; D-glucose from alpha,alpha-trehalose: step 1/1. Hydrolyzes trehalose to glucose. Could be involved, in cells returning to low osmolarity conditions, in the utilization of the accumulated cytoplasmic trehalose, which was synthesized in response to high osmolarity. The chain is Cytoplasmic trehalase from Salmonella choleraesuis (strain SC-B67).